A 477-amino-acid polypeptide reads, in one-letter code: Pyruvate kinase (477 aa).

R34 is a substrate binding site. K(+) contacts are provided by N36, D64, and T65. 36–39 (NTAH) is an ATP binding site. R71 and K150 together coordinate ATP. Residue E216 coordinates Mg(2+). Positions 239, 240, and 272 each coordinate substrate. D240 contributes to the Mg(2+) binding site.

This sequence belongs to the pyruvate kinase family. As to quaternary structure, homotetramer. Mg(2+) is required as a cofactor. K(+) serves as cofactor.

It carries out the reaction pyruvate + ATP = phosphoenolpyruvate + ADP + H(+). The protein operates within carbohydrate degradation; glycolysis; pyruvate from D-glyceraldehyde 3-phosphate: step 5/5. The polypeptide is Pyruvate kinase (pyk) (Borreliella burgdorferi (strain ATCC 35210 / DSM 4680 / CIP 102532 / B31) (Borrelia burgdorferi)).